We begin with the raw amino-acid sequence, 585 residues long: Proline--tRNA ligase (585 aa).

Belongs to the class-II aminoacyl-tRNA synthetase family. ProS type 1 subfamily. As to quaternary structure, homodimer.

Its subcellular location is the cytoplasm. The catalysed reaction is tRNA(Pro) + L-proline + ATP = L-prolyl-tRNA(Pro) + AMP + diphosphate. Functionally, catalyzes the attachment of proline to tRNA(Pro) in a two-step reaction: proline is first activated by ATP to form Pro-AMP and then transferred to the acceptor end of tRNA(Pro). As ProRS can inadvertently accommodate and process non-cognate amino acids such as alanine and cysteine, to avoid such errors it has two additional distinct editing activities against alanine. One activity is designated as 'pretransfer' editing and involves the tRNA(Pro)-independent hydrolysis of activated Ala-AMP. The other activity is designated 'posttransfer' editing and involves deacylation of mischarged Ala-tRNA(Pro). The misacylated Cys-tRNA(Pro) is not edited by ProRS. The polypeptide is Proline--tRNA ligase (Nocardia farcinica (strain IFM 10152)).